Consider the following 146-residue polypeptide: Hemoglobin subunit beta (146 aa).

V1 carries the N-acetylvaline modification. A Globin domain is found at 2 to 146; sequence HLTPEEKSAV…VANALAHKYH (145 aa). Residue T12 is modified to Phosphothreonine. S44 carries the post-translational modification Phosphoserine. An N6-acetyllysine modification is found at K59. H63 serves as a coordination point for heme b. K82 carries the N6-acetyllysine modification. H92 provides a ligand contact to heme b. At C93 the chain carries S-nitrosocysteine. At K144 the chain carries N6-acetyllysine.

Belongs to the globin family. In terms of assembly, heterotetramer of two alpha chains and two beta chains. Red blood cells.

In terms of biological role, involved in oxygen transport from the lung to the various peripheral tissues. The sequence is that of Hemoglobin subunit beta (HBB) from Hylobates lar (Lar gibbon).